Here is an 80-residue protein sequence, read N- to C-terminus: U19-lycotoxin-Ls1b (80 aa).

The signal sequence occupies residues 1–22; the sequence is MSPKVQALIFIVGLITLLAAHA. The propeptide occupies 23 to 34; the sequence is QEELSDNIESER. Cystine bridges form between cysteine 36–cysteine 50, cysteine 43–cysteine 55, cysteine 49–cysteine 66, and cysteine 57–cysteine 64.

Belongs to the neurotoxin 02 (plectoxin) family. 05 (U19-lycotoxin) subfamily. As to expression, expressed by the venom gland.

The protein resides in the secreted. This Lycosa singoriensis (Wolf spider) protein is U19-lycotoxin-Ls1b.